The sequence spans 1061 residues: RecBCD enzyme subunit RecC (1061 aa).

This sequence belongs to the RecC family. In terms of assembly, heterotrimer of RecB, RecC and RecD. All subunits contribute to DNA-binding.

In terms of biological role, a helicase/nuclease that prepares dsDNA breaks (DSB) for recombinational DNA repair. Binds to DSBs and unwinds DNA via a highly rapid and processive ATP-dependent bidirectional helicase activity. Unwinds dsDNA until it encounters a Chi (crossover hotspot instigator) sequence from the 3' direction. Cuts ssDNA a few nucleotides 3' to the Chi site. The properties and activities of the enzyme are changed at Chi. The Chi-altered holoenzyme produces a long 3'-ssDNA overhang and facilitates RecA-binding to the ssDNA for homologous DNA recombination and repair. Holoenzyme degrades any linearized DNA that is unable to undergo homologous recombination. In the holoenzyme this subunit recognizes the wild-type Chi sequence, and when added to isolated RecB increases its ATP-dependent helicase processivity. The sequence is that of RecBCD enzyme subunit RecC from Buchnera aphidicola subsp. Schizaphis graminum (strain Sg).